The primary structure comprises 119 residues: Large ribosomal subunit protein bL20 (119 aa).

This sequence belongs to the bacterial ribosomal protein bL20 family.

Binds directly to 23S ribosomal RNA and is necessary for the in vitro assembly process of the 50S ribosomal subunit. It is not involved in the protein synthesizing functions of that subunit. The chain is Large ribosomal subunit protein bL20 from Geobacillus thermodenitrificans (strain NG80-2).